The following is a 1514-amino-acid chain: ABC transporter C family member 3 (1514 aa).

10 helical membrane-spanning segments follow: residues 35 to 55 (PLFLRWLSGFLHSVLLLVLFF), 83 to 103 (ALFCSLALSLLNLVLMSLSGF), 116 to 136 (LVSSLGFLLGMVSWGVLSICL), 153 to 173 (LWLVFYLVVSCYSLVVDFVMY), 183 to 203 (LLVFDIVAFIAAVFLGYVAVL), 325 to 345 (ILVTAFFAFIYTVASYVGPAL), 364 to 386 (YVLVITFFAAKIVECLSQRHWFF), 439 to 459 (WYMHDPWMVLLQVGLALWILY), 463 to 483 (GLASIAALVATIIVMLINFPF), and 551 to 571 (FVFWGAPTLVSVSTFGACILL). Positions 325-606 (ILVTAFFAFI…LPDTISMIVQ (282 aa)) constitute an ABC transmembrane type-1 1 domain. Residues 640 to 863 (VEVINSTLSW…GTDFMELIGA (224 aa)) enclose the ABC transporter 1 domain. Position 675-682 (675-682 (GTVGSGKS)) interacts with ATP. Transmembrane regions (helical) follow at residues 940 to 960 (YITLAYGGALVPFILLGQVLF), 987 to 1007 (LSTLMIVYVALAFGSSLCILL), 1077 to 1097 (IGIIGVMSQVSWLVFLVFIPV), 1181 to 1201 (LSSLTFVFSLVFLVSIPTGVI), and 1205 to 1225 (LAGLAVTYGLSLNTLQAWLIW). The ABC transmembrane type-1 2 domain maps to 950 to 1232 (VPFILLGQVL…LIWTLCNLEN (283 aa)). An ABC transporter 2 domain is found at 1271-1503 (IRDLQVRYAP…KSSSFSKLVA (233 aa)). ATP is bound at residue 1303–1310 (GRTGSGKS).

The protein belongs to the ABC transporter superfamily. ABCC family. Conjugate transporter (TC 3.A.1.208) subfamily. As to expression, ubiquitous.

It localises to the membrane. The enzyme catalyses ATP + H2O + xenobioticSide 1 = ADP + phosphate + xenobioticSide 2.. With respect to regulation, glutathione-conjugate transport is inhibited by decyl-glutathione and, to a lower extent, by GS-GS, but not by GSH. All transports are inhibited by vanadate. In terms of biological role, pump for glutathione S-conjugates. Mediates the transport of glutathione conjugates such as chlorodinitrobenzene-GS (DNB-GS), and of chlorophyll catabolites such as Bn-NCC-1. Also transports heavy metals such as cadmium (Cd). In Arabidopsis thaliana (Mouse-ear cress), this protein is ABC transporter C family member 3 (ABCC3).